The sequence spans 78 residues: D-alanyl carrier protein (78 aa).

Residues M1–R78 enclose the Carrier domain. Position 36 is an O-(pantetheine 4'-phosphoryl)serine (S36).

Belongs to the DltC family. 4'-phosphopantetheine is transferred from CoA to a specific serine of apo-DCP.

Its subcellular location is the cytoplasm. Its pathway is cell wall biogenesis; lipoteichoic acid biosynthesis. Functionally, carrier protein involved in the D-alanylation of lipoteichoic acid (LTA). The loading of thioester-linked D-alanine onto DltC is catalyzed by D-alanine--D-alanyl carrier protein ligase DltA. The DltC-carried D-alanyl group is further transferred to cell membrane phosphatidylglycerol (PG) by forming an ester bond, probably catalyzed by DltD. D-alanylation of LTA plays an important role in modulating the properties of the cell wall in Gram-positive bacteria, influencing the net charge of the cell wall. This chain is D-alanyl carrier protein, found in Staphylococcus xylosus.